The primary structure comprises 123 residues: Large ribosomal subunit protein uL18 (123 aa).

It belongs to the universal ribosomal protein uL18 family. As to quaternary structure, part of the 50S ribosomal subunit; part of the 5S rRNA/L5/L18/L25 subcomplex. Contacts the 5S and 23S rRNAs.

This is one of the proteins that bind and probably mediate the attachment of the 5S RNA into the large ribosomal subunit, where it forms part of the central protuberance. The chain is Large ribosomal subunit protein uL18 from Chlamydia abortus (strain DSM 27085 / S26/3) (Chlamydophila abortus).